A 92-amino-acid chain; its full sequence is Small ribosomal subunit protein uS15c (92 aa).

Belongs to the universal ribosomal protein uS15 family. As to quaternary structure, part of the 30S ribosomal subunit.

It localises to the plastid. It is found in the chloroplast. The chain is Small ribosomal subunit protein uS15c (rps15-A) from Lemna minor (Common duckweed).